Reading from the N-terminus, the 192-residue chain is Fe/S biogenesis protein NfuA (192 aa).

Residues C149 and C152 each contribute to the [4Fe-4S] cluster site.

Belongs to the NfuA family. In terms of assembly, homodimer. The cofactor is [4Fe-4S] cluster.

Involved in iron-sulfur cluster biogenesis. Binds a 4Fe-4S cluster, can transfer this cluster to apoproteins, and thereby intervenes in the maturation of Fe/S proteins. Could also act as a scaffold/chaperone for damaged Fe/S proteins. This chain is Fe/S biogenesis protein NfuA, found in Shewanella oneidensis (strain ATCC 700550 / JCM 31522 / CIP 106686 / LMG 19005 / NCIMB 14063 / MR-1).